A 575-amino-acid polypeptide reads, in one-letter code: Thiol:disulfide interchange protein DsbD (575 aa).

The N-terminal stretch at 1–24 (MIKRTLMLFLLLCSPLLTPAAANA) is a signal peptide. Disulfide bonds link C126/C132 and C192/C314. The next 8 helical transmembrane spans lie at 180 to 200 (AILIGIGIAFTPCVLPMYPLI), 216 to 236 (IFWLALSYVQGMAVTYTLLGL), 253 to 273 (YVLIGLSVLFILLALSMFGLY), 297 to 317 (LFGVFAMGALAGLICSPCTTA), 336 to 356 (GLTLYLYALGMGLPLIAVTLF), 367 to 387 (WMQYVKEAFGFIILALPVFLL), 394 to 414 (AWGIRLWSLLAVSFLGWGFVL), and 425 to 445 (VIQLILLILMLIATRPLQDWF). The region spanning 444-575 (WFWGTTVTQQ…FNEHLQHLPK (132 aa)) is the Thioredoxin domain. C490 and C493 are joined by a disulfide.

It belongs to the thioredoxin family. DsbD subfamily.

It is found in the cell inner membrane. It carries out the reaction [protein]-dithiol + NAD(+) = [protein]-disulfide + NADH + H(+). It catalyses the reaction [protein]-dithiol + NADP(+) = [protein]-disulfide + NADPH + H(+). Required to facilitate the formation of correct disulfide bonds in some periplasmic proteins and for the assembly of the periplasmic c-type cytochromes. Acts by transferring electrons from cytoplasmic thioredoxin to the periplasm. This transfer involves a cascade of disulfide bond formation and reduction steps. The polypeptide is Thiol:disulfide interchange protein DsbD (Photorhabdus laumondii subsp. laumondii (strain DSM 15139 / CIP 105565 / TT01) (Photorhabdus luminescens subsp. laumondii)).